A 55-amino-acid polypeptide reads, in one-letter code: Large ribosomal subunit protein bL33 (55 aa).

It belongs to the bacterial ribosomal protein bL33 family.

The polypeptide is Large ribosomal subunit protein bL33 (Ruegeria pomeroyi (strain ATCC 700808 / DSM 15171 / DSS-3) (Silicibacter pomeroyi)).